The sequence spans 1268 residues: MSAPAGSSHPAASARIPPKFGGAAVSGAAAPAGPGAGPAPHQQNGPAQNQMQVPSGYGLHHQNYIAPSGHYSQGPGKMTSLPLDTQCGDYYSALYTVPTQNVTPNTVNQQPGAQQLYSRGPPAPHIVGSTLGSFQGAASSASHLHTSASQPYSSFVNHYNSPAMYSASSSVASQGFPSTCGHYAMSTVSNAAYPSVSYPSLPAGDTYGQMFTSQNAPTVRPVKDNSFSGQNTAISHPSPLPPLPSQQHHQQQSLSGYSTLTWSSPGLPSTQDNLIRNHTGSLAVANNNPTITVADSLSCPVMQNVQPPKSSPVVSTVLSGSSGSSSTRTPPTANHPVEPVTSVTQPSELLQQKGVQYGEYVNNQASSAPTPLSSTSDDEEEEEEDEEAGVDSSSTTSSASPMPNSYDALEGGSYPDMLSSSASSPAPDPAPEPDPASAPAPASAPAPVVPQPSKMAKPFGYGYPTLQPGYQNATAPLISGVQPSNPVYSGFQQYPQQYPGVNQLSSSIGGLSLQSSPQPESLRPVNLTQERNILPMTPVWAPVPNLNADLKKLNCSPDSFRCTLTNIPQTQALLNKAKLPLGLLLHPFRDLTQLPVITSNTIVRCRSCRTYINPFVSFIDQRRWKCNLCYRVNDVPEEFMYNPLTRSYGEPHKRPEVQNSTVEFIASSDYMLRPPQPAVYLFVLDVSHNAVEAGYLTILCQSLLENLDKLPGDSRTRIGFMTFDSTIHFYNLQEGLSQPQMLIVSDIDDVFLPTPDSLLVNLYESKELIKDLLNALPNMFTNTRETHSALGPALQAAFKLMSPTGGRVSVFQTQLPSLGAGLLQSREDPNQRSSTKVVQHLGPATDFYKKLALDCSGQQTAVDLFLLSSQYSDLASLACMSKYSAGCIYYYPSFHYTHNPSQAEKLQKDLKRYLTRKIGFEAVMRIRCTKGLSMHTFHGNFFVRSTDLLSLANINPDAGFAVQLSIEESLTDTSLVCFQTALLYTSSKGERRIRVHTLCLPVVSSLADVYAGVDVQAAICLLANMAVDRSVSSSLSDARDALVNAVVDSLSAYGSTVSNLQHSALMAPSSLKLFPLYVLALLKQKAFRTGTSTRLDDRVYAMCQIKSQPLVHLMKMIHPNLYRIDRLTDEGAVHVNDRIVPQPPLQKLSAEKLTREGAFLMDCGSVFYIWVGKGCDNNFIEDVLGYTNFASIPQKMTHLPELDTLSSERARSFITWLRDSRPLSPILHIVKDESPAKAEFFQHLIEDRTEAAFSYYEFLLHVQQQICK.

2 stretches are compositionally biased toward low complexity: residues M1 to A14 and G21 to Q48. Disordered regions lie at residues M1 to Y71, A216 to S263, Q303 to Q345, and N362 to Q451. The residue at position 2 (S2) is an N-acetylserine. S55 is subject to Phosphoserine. Polar residues predominate over residues N225 to I234. 3 stretches are compositionally biased toward low complexity: residues S245–S255, S311–T332, and A365–T375. T329 carries the phosphothreonine modification. The span at S376–G389 shows a compositional bias: acidic residues. A compositionally biased stretch (pro residues) spans A426–P450. Positions 605, 608, 626, and 629 each coordinate Zn(2+). A zinc finger-like region spans residues C605 to C629. A Gelsolin-like repeat occupies P1141–F1213. A Phosphoserine modification is found at S1224.

This sequence belongs to the SEC23/SEC24 family. SEC24 subfamily. COPII is composed of at least five proteins: the Sec23/24 complex, the Sec13/31 complex and SAR1. Interacts with STING1; promoting STING1 translocation to COPII vesicles in a STEEP1-dependent manner. Interacts with RNF139. Interacts with TMED2 and TMED10. Interacts with CNIH4.

The protein localises to the cytoplasmic vesicle. The protein resides in the COPII-coated vesicle membrane. It localises to the endoplasmic reticulum membrane. It is found in the cytoplasm. Its subcellular location is the cytosol. Its function is as follows. Component of the coat protein complex II (COPII) which promotes the formation of transport vesicles from the endoplasmic reticulum (ER). The coat has two main functions, the physical deformation of the endoplasmic reticulum membrane into vesicles and the selection of cargo molecules for their transport to the Golgi complex. Plays a central role in cargo selection within the COPII complex and together with SEC24A may have a different specificity compared to SEC24C and SEC24D. May package preferentially cargos with cytoplasmic DxE or LxxLE motifs and may also recognize conformational epitopes. The protein is Protein transport protein Sec24B of Homo sapiens (Human).